A 405-amino-acid polypeptide reads, in one-letter code: L-rhamnonate dehydratase (405 aa).

2 residues coordinate substrate: His33 and Arg59. Mg(2+)-binding residues include Asp226, Glu252, and Glu280. His329 serves as the catalytic Proton acceptor. Glu349 is a binding site for substrate.

The protein belongs to the mandelate racemase/muconate lactonizing enzyme family. RhamD subfamily. Homooctamer; tetramer of dimers. Requires Mg(2+) as cofactor.

The catalysed reaction is L-rhamnonate = 2-dehydro-3-deoxy-L-rhamnonate + H2O. Its function is as follows. Catalyzes the dehydration of L-rhamnonate to 2-keto-3-deoxy-L-rhamnonate (KDR). This chain is L-rhamnonate dehydratase, found in Escherichia coli O45:K1 (strain S88 / ExPEC).